Here is a 1042-residue protein sequence, read N- to C-terminus: Carbamoyl phosphate synthase large chain (1042 aa).

The segment at 1–417 is carboxyphosphate synthetic domain; sequence MTEDSRTILL…SLLKALRSSE (417 aa). 12 residues coordinate ATP: Arg127, Arg182, Gly188, Gly189, Glu221, Ile223, Glu228, Gly254, Ile255, His256, Gln297, and Glu314. The ATP-grasp 1 domain maps to 131–343; sequence RQRMADLGQP…IARVTAKVAL (213 aa). Mg(2+)-binding residues include Gln297, Glu314, and Asn316. Residues Gln297, Glu314, and Asn316 each coordinate Mn(2+). The interval 418-558 is oligomerization domain; the sequence is YDPSVDWATV…SQGSTGSDVR (141 aa). The carbamoyl phosphate synthetic domain stretch occupies residues 559–947; sequence ADRDAHSVVI…WKAQVAASNA (389 aa). The ATP-grasp 2 domain maps to 689–880; sequence NRLLDERDIS…IAKLAAKVMA (192 aa). The ATP site is built by Arg725, Glu764, Leu766, Glu771, Gly796, Val797, His798, Ser799, Gln839, and Glu851. Positions 839, 851, and 853 each coordinate Mg(2+). Residues Gln839, Glu851, and Asn853 each coordinate Mn(2+). In terms of domain architecture, MGS-like spans 947-1042; the sequence is APVPGSTAVV…DRPVNDETWG (96 aa). An allosteric domain region spans residues 948 to 1042; it reads PVPGSTAVVD…DRPVNDETWG (95 aa).

It belongs to the CarB family. As to quaternary structure, composed of two chains; the small (or glutamine) chain promotes the hydrolysis of glutamine to ammonia, which is used by the large (or ammonia) chain to synthesize carbamoyl phosphate. Tetramer of heterodimers (alpha,beta)4. The cofactor is Mg(2+). Mn(2+) is required as a cofactor.

It catalyses the reaction hydrogencarbonate + L-glutamine + 2 ATP + H2O = carbamoyl phosphate + L-glutamate + 2 ADP + phosphate + 2 H(+). The catalysed reaction is hydrogencarbonate + NH4(+) + 2 ATP = carbamoyl phosphate + 2 ADP + phosphate + 2 H(+). Its pathway is amino-acid biosynthesis; L-arginine biosynthesis; carbamoyl phosphate from bicarbonate: step 1/1. It functions in the pathway pyrimidine metabolism; UMP biosynthesis via de novo pathway; (S)-dihydroorotate from bicarbonate: step 1/3. In terms of biological role, large subunit of the glutamine-dependent carbamoyl phosphate synthetase (CPSase). CPSase catalyzes the formation of carbamoyl phosphate from the ammonia moiety of glutamine, carbonate, and phosphate donated by ATP, constituting the first step of 2 biosynthetic pathways, one leading to arginine and/or urea and the other to pyrimidine nucleotides. The large subunit (synthetase) binds the substrates ammonia (free or transferred from glutamine from the small subunit), hydrogencarbonate and ATP and carries out an ATP-coupled ligase reaction, activating hydrogencarbonate by forming carboxy phosphate which reacts with ammonia to form carbamoyl phosphate. This is Carbamoyl phosphate synthase large chain from Halobacterium salinarum (strain ATCC 700922 / JCM 11081 / NRC-1) (Halobacterium halobium).